The chain runs to 462 residues: G-patch domain and KOW motifs-containing protein homolog 1 (462 aa).

Disordered stretches follow at residues 1–26 (MVEQ…KREE) and 182–218 (LKLP…EEEK). A G-patch domain is found at 154–202 (IESFGLAILRGCNWKDGDGIGKNPQKVALKLPNRRPPGLGLGATPKNPV). A KOW 1 domain is found at 221–248 (EIKVGSFIKVVDGRNKGVYGKVEGRDDD). Residues 289–305 (EYDKEKDRLETERKKLE) are compositionally biased toward basic and acidic residues. Residues 289–337 (EYDKEKDRLETERKKLESQPPSTSTSQSSKDYKSKSSSSKHDKNSSEYE) form a disordered region. Residues 306–317 (SQPPSTSTSQSS) are compositionally biased toward low complexity. Positions 318–337 (KDYKSKSSSSKHDKNSSEYE) are enriched in basic and acidic residues. In terms of domain architecture, KOW 2 spans 401–428 (PREIGEKLMIVAGKRSGQLAVMLDKDKR).

This sequence belongs to the MOS2 family.

The protein localises to the nucleus. This chain is G-patch domain and KOW motifs-containing protein homolog 1, found in Caenorhabditis elegans.